Reading from the N-terminus, the 618-residue chain is MEGEQDIGVEFLGDYKILCYLRKGLWCQDILAEHRFIKKRYILKLLCSELSSSEAFMTAFHEAIIKLATIRHPGIISIENVSQAEGQYFLVTEEKEVPTLSLAQYLSSCSQGLSELEAKDLICQLAEILDYAHANRLIHGGLSLDSVHIDLTGQSPKVFLPELGFSFLLKDQYTQSLLRDSSEKSSFDKLKQILLFQAPETALGTVAEDVYAFGVIVYFLLFRQLPQGAFPLPSEAFPEYVYDWDRLIQSCLSYAVEKRPKKLAPLLVKKTLGEQFLAAKIQCSEEDLREIEEEPQVPSVANILQKVEDKIIEETSDHLEFVLVEAKSIDEAMNTSVDSKEEVVAEDESYSNALQSLLIREPVVSRYVEEEKEEVKPQPLFTEMVFIEGGKFLRGSREGQRDEHPVHEIFLHSFFLDIHPVTNEQFVRYLECSGSEQDKYYNELIRLKDSRIQRRSGKLVIEPGYAKHPVVGVTWYGASGYASWVGKRLPTEAEWEIASCGGVTQLRYPCGEEIDKSQANFFSSDTTPVMSYPANPYGLYDMAGNVYEWCEDWYGYDFYEISAQESHAPQGPAQGVYRVLRGGCWKSLKDDLRCAHRHRNNPGAVNSTYGFRCAKGVK.

Positions 15 to 381 (YKILCYLRKG…KEEVKPQPLF (367 aa)) constitute a Protein kinase domain. Residues 21-29 (LRKGLWCQD) and K44 contribute to the ATP site.

The protein belongs to the protein kinase superfamily. Ser/Thr protein kinase family. In terms of processing, autophosphorylated on serine and threonine residues.

It catalyses the reaction L-seryl-[protein] + ATP = O-phospho-L-seryl-[protein] + ADP + H(+). The catalysed reaction is L-threonyl-[protein] + ATP = O-phospho-L-threonyl-[protein] + ADP + H(+). In terms of biological role, together with the serine/threonine kinase PknD, may play a role in the specific interactions with host proteins during intracellular growth. This chain is Serine/threonine-protein kinase pkn1 (pkn1), found in Chlamydia caviae (strain ATCC VR-813 / DSM 19441 / 03DC25 / GPIC) (Chlamydophila caviae).